A 236-amino-acid chain; its full sequence is 5'-methylthioadenosine/S-adenosylhomocysteine nucleosidase (236 aa).

E12 functions as the Proton acceptor in the catalytic mechanism. Substrate is bound by residues G78, I153, and 174 to 175 (ME). Residue D198 is the Proton donor of the active site.

Belongs to the PNP/UDP phosphorylase family. MtnN subfamily.

The enzyme catalyses S-adenosyl-L-homocysteine + H2O = S-(5-deoxy-D-ribos-5-yl)-L-homocysteine + adenine. It carries out the reaction S-methyl-5'-thioadenosine + H2O = 5-(methylsulfanyl)-D-ribose + adenine. It catalyses the reaction 5'-deoxyadenosine + H2O = 5-deoxy-D-ribose + adenine. The protein operates within amino-acid biosynthesis; L-methionine biosynthesis via salvage pathway; S-methyl-5-thio-alpha-D-ribose 1-phosphate from S-methyl-5'-thioadenosine (hydrolase route): step 1/2. Its function is as follows. Catalyzes the irreversible cleavage of the glycosidic bond in both 5'-methylthioadenosine (MTA) and S-adenosylhomocysteine (SAH/AdoHcy) to adenine and the corresponding thioribose, 5'-methylthioribose and S-ribosylhomocysteine, respectively. Also cleaves 5'-deoxyadenosine, a toxic by-product of radical S-adenosylmethionine (SAM) enzymes, into 5-deoxyribose and adenine. The protein is 5'-methylthioadenosine/S-adenosylhomocysteine nucleosidase of Shewanella baltica (strain OS185).